A 414-amino-acid polypeptide reads, in one-letter code: MKINGVKGMNDVLPADVARWHEMEAVAREVFALYGYREVRTPAVEHAALFARGVGEATDIVNKEMYVFEDKGEELLALRPEGTAGTVRAFIEHGAFVEGPQKWFYMGPMFRRERPQKGRYRQFHQIGCEAFGVAEPYLDAEQIALLADYFARLGVTAELKLNSVGDAQCRPAYLADLKAYLVANQGALCADCKDRIERNPLRVLDCKVESCQPVLEQAPRLLERLCEPCRAHFDQVKAGLDALGVAYRVEPRLVRGLDYYVRTAYEFTSDALGSQSAVAGGGRYDRLVETLGGPPTPGIGFALGEERLSMILEKVGRAAPERRPAVFFVSADATGALEALRLAAGLRRAGIACELDPRGGKLKAQFKQAERVGARWAVVLGGNEVATGQAKLKDLQTREETPVALSELAARVSG.

This sequence belongs to the class-II aminoacyl-tRNA synthetase family. As to quaternary structure, homodimer.

It localises to the cytoplasm. It catalyses the reaction tRNA(His) + L-histidine + ATP = L-histidyl-tRNA(His) + AMP + diphosphate + H(+). This chain is Histidine--tRNA ligase, found in Anaeromyxobacter dehalogenans (strain 2CP-1 / ATCC BAA-258).